The chain runs to 112 residues: Glutaredoxin-C6 (112 aa).

The Glutaredoxin domain maps to 3 to 103; that stretch reads LAKAKETVAS…PLLTEAGAIA (101 aa). A disulfide bond links C23 and C26.

This sequence belongs to the glutaredoxin family. CPYC subfamily. In terms of processing, the N-terminus is blocked. As to expression, expressed in aleurone layer.

It is found in the cytoplasm. Its function is as follows. Has a glutathione-disulfide oxidoreductase activity in the presence of NADPH and glutathione reductase. Reduces low molecular weight disulfides and proteins. Possesses thioltransferase, dehydroascorbate reductase and GSH-dependent peroxidase activities in vitro. In Oryza sativa subsp. japonica (Rice), this protein is Glutaredoxin-C6 (GRXC6).